The sequence spans 402 residues: MRLLHVVVATVSLTGAITSLIAAQHYNVSSDVIGGIEKEDFGVGCNSRTKYPTAADTSKLQPRFAYLITNSLADFIAVHFIKFNLPDNDFVQIRAADPSAVDNRVLRYRGNESNGVFFADALSTKSVIVELFTNASSSAQKTNSSKCVGFAVDSYQYLGEGSTLNGSKEEVCGADNSREASCYSGYTNAFRASNAVVRLLIKKSTGSFFCTGWLIGSEGHLITNNHCISTQSHASNTEFEFMAQGSSCSINCEGARACFGSIRASYATLIYADATLDYALVKLPINLSGQYGYLRLRSSGAVMNERVYVPQHPAGWGKRIAMKSDNGFGTVTSLTMGGCAPNQVAYYLDTQGGSSGSPVLSWSDNAVVALHHCGGCPNTAINSYKLVNDMKWRGILPANACT.

The N-terminal stretch at 1–23 is a signal peptide; it reads MRLLHVVVATVSLTGAITSLIAA. The N-linked (GlcNAc...) asparagine glycan is linked to N27. The short motif at 104-107 is the RxLR element; the sequence is RVLR. 5 N-linked (GlcNAc...) asparagine glycosylation sites follow: N111, N134, N143, N165, and N286.

The protein belongs to the RxLR effector family.

It localises to the secreted. Its subcellular location is the host cell. Its function is as follows. Secreted effector that completely suppresses the host cell death induced by cell death-inducing proteins. This chain is Secreted RxLR effector protein 73, found in Plasmopara viticola (Downy mildew of grapevine).